The following is a 111-amino-acid chain: Rubredoxin (111 aa).

Residues 11-62 (LDRFECRSCGYVYEPEKGDSKHDIAPETPFAELPINWRCPVCTAKKAAFSNI) enclose the Rubredoxin-like domain. Fe cation is bound by residues C16, C19, C49, and C52.

This sequence belongs to the rubredoxin family. Requires Fe(3+) as cofactor.

Rubredoxin is a small nonheme, iron protein lacking acid-labile sulfide. Its single Fe, chelated to 4 Cys, functions as an electron acceptor and may also stabilize the conformation of the molecule. Could be involved in hydrogenase-linked redox processes. The sequence is that of Rubredoxin (rub) from Trichormus variabilis (strain ATCC 29413 / PCC 7937) (Anabaena variabilis).